The primary structure comprises 554 residues: Glucose-6-phosphate isomerase (554 aa).

E359 acts as the Proton donor in catalysis. Catalysis depends on residues H390 and K518.

This sequence belongs to the GPI family.

It is found in the cytoplasm. The catalysed reaction is alpha-D-glucose 6-phosphate = beta-D-fructose 6-phosphate. The protein operates within carbohydrate biosynthesis; gluconeogenesis. It functions in the pathway carbohydrate degradation; glycolysis; D-glyceraldehyde 3-phosphate and glycerone phosphate from D-glucose: step 2/4. Catalyzes the reversible isomerization of glucose-6-phosphate to fructose-6-phosphate. This Pseudomonas savastanoi pv. phaseolicola (strain 1448A / Race 6) (Pseudomonas syringae pv. phaseolicola (strain 1448A / Race 6)) protein is Glucose-6-phosphate isomerase.